The primary structure comprises 200 residues: Inner membrane-spanning protein YciB (200 aa).

A run of 6 helical transmembrane segments spans residues 1-21 (MPPL…FFAN), 37-57 (IGAP…IALA), 66-86 (LPIM…LTLW), 103-123 (LFGG…GYVF), 136-156 (KLTL…EIVW), and 167-187 (FKVW…MPLI).

It belongs to the YciB family.

Its subcellular location is the cell inner membrane. Plays a role in cell envelope biogenesis, maintenance of cell envelope integrity and membrane homeostasis. The sequence is that of Inner membrane-spanning protein YciB from Brucella suis biovar 1 (strain 1330).